We begin with the raw amino-acid sequence, 632 residues long: Cyclic GMP-AMP synthase-like receptor 2 (632 aa).

Asp71, Asp73, and Asp181 together coordinate Mg(2+). A Mn(2+)-binding site is contributed by Asp295.

This sequence belongs to the mab-21 family. The cofactor is Mg(2+). Mn(2+) is required as a cofactor.

Its function is as follows. Nucleotidyltransferase that catalyzes the formation of some cyclic nucleotide and plays a key role in innate immunity. Directly binds some unknown ligand, activating the nucleotidyltransferase activity, leading to synthesis of a second messenger that binds to and activates Sting, thereby triggering the immune response via activation of the NF-kappa-B transcription factor. This is Cyclic GMP-AMP synthase-like receptor 2 from Crassostrea virginica (Eastern oyster).